The following is a 482-amino-acid chain: Abscisic acid 8'-hydroxylase 2 (482 aa).

A helical membrane pass occupies residues 20–40 (PALITLTIVVVVVVLLFKWWL). Residue C431 coordinates heme.

Belongs to the cytochrome P450 family. The cofactor is heme. Mainly expressed in dry seeds. Lower expression in rosette leaves, flowers, siliques and stems. Not expressed in roots. Expressed in both endosperm and vascular tissues of embryo during the seed development and in cortex and endodermis in germinating embryo.

The protein localises to the membrane. The enzyme catalyses 2-cis-(+)-abscisate + reduced [NADPH--hemoprotein reductase] + O2 = (+)-8'-hydroxyabscisate + oxidized [NADPH--hemoprotein reductase] + H2O + H(+). Its pathway is plant hormone degradation; abscisic acid degradation. Functionally, involved in the oxidative degradation of abscisic acid, but not in the isomerization of the produced 8'-hydroxyabscisic acid (8'-OH-ABA) to (-)-phaseic acid (PA). Involved in the control of seed dormancy and germination. In Arabidopsis thaliana (Mouse-ear cress), this protein is Abscisic acid 8'-hydroxylase 2 (CYP707A2).